Reading from the N-terminus, the 280-residue chain is Bifunctional protein FolD (280 aa).

Residues 166–168 and Ser-191 each bind NADP(+); that span reads GRS.

It belongs to the tetrahydrofolate dehydrogenase/cyclohydrolase family. Homodimer.

It catalyses the reaction (6R)-5,10-methylene-5,6,7,8-tetrahydrofolate + NADP(+) = (6R)-5,10-methenyltetrahydrofolate + NADPH. The enzyme catalyses (6R)-5,10-methenyltetrahydrofolate + H2O = (6R)-10-formyltetrahydrofolate + H(+). It functions in the pathway one-carbon metabolism; tetrahydrofolate interconversion. Its function is as follows. Catalyzes the oxidation of 5,10-methylenetetrahydrofolate to 5,10-methenyltetrahydrofolate and then the hydrolysis of 5,10-methenyltetrahydrofolate to 10-formyltetrahydrofolate. This Marinomonas sp. (strain MWYL1) protein is Bifunctional protein FolD.